A 397-amino-acid polypeptide reads, in one-letter code: Lymphoid enhancer-binding factor 1 (397 aa).

The tract at residues 1 to 60 is CTNNB1-binding; the sequence is MPQLSGGGGGGDPELCATDEMIPFKDEGDPQKEKIFAEISHPEEEGDLADIKSSLVNESE. Lys-25 is covalently cross-linked (Glycyl lysine isopeptide (Lys-Gly) (interchain with G-Cter in SUMO)). The interval 38–102 is disordered; sequence EISHPEEEGD…KHPDGGLYNK (65 aa). Positions 80–96 are enriched in basic and acidic residues; sequence PYHDKAREHPDDGKHPD. Residue Ser-130 is modified to Phosphoserine. Thr-153 bears the Phosphothreonine; by NLK mark. Phosphoserine; by NLK is present on Ser-164. 2 disordered regions span residues 164-190 and 266-296; these read SPGSHPSHIPSEVNPKQGMSRHPPAPE and VKQEHPHTDSDLMHVKPEHEQRKEQEPKRPH. A Glycyl lysine isopeptide (Lys-Gly) (interchain with G-Cter in SUMO) cross-link involves residue Lys-267. Residues 267–294 show a composition bias toward basic and acidic residues; it reads KQEHPHTDSDLMHVKPEHEQRKEQEPKR. Positions 297–365 form a DNA-binding region, HMG box; it reads IKKPLNAFML…LHMQLYPGWS (69 aa). The disordered stretch occupies residues 367-397; it reads RDNYGKKKKRKREKLQESTSGTGPRMTAAYI.

Belongs to the TCF/LEF family. In terms of assembly, binds the armadillo repeat of CTNNB1 and forms a stable complex. Interacts with TLE1, PIASG, ALYREF/THOC4, EP300, MDFI and MDFIC. Interacts with DAZAP2. In terms of processing, phosphorylated at Thr-153 and/or Ser-164 by NLK. Phosphorylation by NLK at these sites represses LEF1-mediated transcriptional activation of target genes of the canonical Wnt signaling pathway.

The protein resides in the nucleus. Functionally, transcription factor that binds DNA in a sequence-specific manner. Participates in the Wnt signaling pathway. Activates transcription of target genes in the presence of CTNNB1 and EP300. PIASG antagonizes both Wnt-dependent and Wnt-independent activation by LEF1. TLE1, TLE2, TLE3 and TLE4 repress transactivation mediated by LEF1 and CTNNB1. Regulates T-cell receptor alpha enhancer function. Required for IL17A expressing gamma-delta T-cell maturation and development, via binding to regulator loci of BLK to modulate expression. Acts as a positive regulator of odontoblast differentiation during mesenchymal tooth germ formation, expression is repressed during the bell stage by MSX1-mediated inhibition of CTNNB1 signaling. May play a role in hair cell differentiation and follicle morphogenesis. The sequence is that of Lymphoid enhancer-binding factor 1 from Rattus norvegicus (Rat).